The primary structure comprises 121 residues: Small ribosomal subunit protein uS13 (121 aa).

The interval 96-121 (PVRGQNTKNNARTRKGKAVAIAGKKK) is disordered. Basic residues predominate over residues 106–121 (ARTRKGKAVAIAGKKK).

The protein belongs to the universal ribosomal protein uS13 family. As to quaternary structure, part of the 30S ribosomal subunit. Forms a loose heterodimer with protein S19. Forms two bridges to the 50S subunit in the 70S ribosome.

Functionally, located at the top of the head of the 30S subunit, it contacts several helices of the 16S rRNA. In the 70S ribosome it contacts the 23S rRNA (bridge B1a) and protein L5 of the 50S subunit (bridge B1b), connecting the 2 subunits; these bridges are implicated in subunit movement. Contacts the tRNAs in the A and P-sites. The protein is Small ribosomal subunit protein uS13 of Streptococcus gordonii (strain Challis / ATCC 35105 / BCRC 15272 / CH1 / DL1 / V288).